The sequence spans 347 residues: WAT1-related protein At4g15540 (347 aa).

Helical transmembrane passes span 15–35 (VVPF…SILY), 47–67 (VFVF…SLIF), 73–93 (LPTA…LGLT), 108–128 (TLSS…AIFF), 139–159 (ATQA…VIVL), 178–198 (WIIG…WFIL), 210–230 (IAVV…VCLL), 243–263 (GFSL…GSVI), 276–296 (ISLF…IFLG), and 299–319 (LHLG…TVIW). The 129-residue stretch at 30–158 (GSSILYKAAT…VSISGALVIV (129 aa)) folds into the EamA 1 domain. Residues 216–317 (YNLCATLISG…VILSFGFYTV (102 aa)) form the EamA 2 domain.

This sequence belongs to the drug/metabolite transporter (DMT) superfamily. Plant drug/metabolite exporter (P-DME) (TC 2.A.7.4) family.

The protein localises to the membrane. This is WAT1-related protein At4g15540 from Arabidopsis thaliana (Mouse-ear cress).